A 475-amino-acid chain; its full sequence is Threonine synthase (475 aa).

N6-(pyridoxal phosphate)lysine is present on Lys120.

Belongs to the threonine synthase family. Pyridoxal 5'-phosphate serves as cofactor.

It catalyses the reaction O-phospho-L-homoserine + H2O = L-threonine + phosphate. It functions in the pathway amino-acid biosynthesis; L-threonine biosynthesis; L-threonine from L-aspartate: step 5/5. Its function is as follows. Catalyzes the gamma-elimination of phosphate from L-phosphohomoserine and the beta-addition of water to produce L-threonine. The protein is Threonine synthase (thrC) of Methylobacillus glycogenes.